We begin with the raw amino-acid sequence, 100 residues long: Integration host factor subunit alpha (100 aa).

The protein belongs to the bacterial histone-like protein family. Heterodimer of an alpha and a beta chain.

This protein is one of the two subunits of integration host factor, a specific DNA-binding protein that functions in genetic recombination as well as in transcriptional and translational control. This Jannaschia sp. (strain CCS1) protein is Integration host factor subunit alpha.